The primary structure comprises 239 residues: 7-cyano-7-deazaguanine synthase (239 aa).

13–23 (FSGGQDSTTCL) is a binding site for ATP. C192, C201, C204, and C207 together coordinate Zn(2+).

It belongs to the QueC family. Zn(2+) is required as a cofactor.

It carries out the reaction 7-carboxy-7-deazaguanine + NH4(+) + ATP = 7-cyano-7-deazaguanine + ADP + phosphate + H2O + H(+). Its pathway is purine metabolism; 7-cyano-7-deazaguanine biosynthesis. In terms of biological role, catalyzes the ATP-dependent conversion of 7-carboxy-7-deazaguanine (CDG) to 7-cyano-7-deazaguanine (preQ(0)). The protein is 7-cyano-7-deazaguanine synthase of Shewanella sp. (strain MR-7).